Consider the following 833-residue polypeptide: Leucine--tRNA ligase (833 aa).

A 'HIGH' region motif is present at residues 41–52; that stretch reads PYPSGAGLHVGH. The 'KMSKS' region motif lies at 610 to 614; it reads KMSKS. An ATP-binding site is contributed by lysine 613.

The protein belongs to the class-I aminoacyl-tRNA synthetase family.

It localises to the cytoplasm. The enzyme catalyses tRNA(Leu) + L-leucine + ATP = L-leucyl-tRNA(Leu) + AMP + diphosphate. The protein is Leucine--tRNA ligase of Streptococcus pyogenes serotype M4 (strain MGAS10750).